We begin with the raw amino-acid sequence, 357 residues long: Protein NDRG2 (357 aa).

Over residues 1–14 (MAELREVQITEEKP) the composition is skewed to basic and acidic residues. A disordered region spans residues 1 to 26 (MAELREVQITEEKPLLPGQTPEVAKT). Alanine 2 is subject to N-acetylalanine. At threonine 20 the chain carries Phosphothreonine. Phosphoserine is present on residues serine 312 and serine 314. The residue at position 316 (threonine 316) is a Phosphothreonine. At serine 318 the chain carries Phosphoserine. Phosphothreonine is present on threonine 320. A disordered region spans residues 320–357 (TSAASIDGNRSRSRTLSQSSESGTLSSGPPGHTMEVSC). Serine 321, serine 324, and serine 330 each carry phosphoserine. A compositionally biased stretch (low complexity) spans 333-347 (RTLSQSSESGTLSSG). At threonine 334 the chain carries Phosphothreonine. Phosphoserine is present on residues serine 336, serine 338, serine 339, and serine 341. Threonine 343 carries the phosphothreonine modification. Serine 356 carries the post-translational modification Phosphoserine.

This sequence belongs to the NDRG family. As to quaternary structure, interacts with CTNNB1.

Its subcellular location is the cytoplasm. It is found in the perinuclear region. The protein localises to the cell projection. The protein resides in the growth cone. Contributes to the regulation of the Wnt signaling pathway. Down-regulates CTNNB1-mediated transcriptional activation of target genes, such as CCND1, and may thereby act as tumor suppressor. May be involved in dendritic cell and neuron differentiation. The polypeptide is Protein NDRG2 (NDRG2) (Bos taurus (Bovine)).